The sequence spans 530 residues: Estrogen receptor beta (530 aa).

The modulating stretch occupies residues 1 to 148; sequence MEIKNSPSSL…SPNAKRDAHF (148 aa). S61 is subject to Phosphoserine; alternate. A glycan (O-linked (GlcNAc) serine; alternate) is linked at S61. S87 and S105 each carry phosphoserine; by MAPK. NR C4-type zinc fingers lie at residues 149–169 and 185–209; these read CPVCSDYASGYHYGVWSCEGC and CPATNQCTIDKNRRKSCQACRLRKC. Residues 149-214 constitute a DNA-binding region (nuclear receptor); sequence CPVCSDYASG…RLRKCYEVGM (66 aa). Residues 264–498 form the NR LBD domain; the sequence is SPEQLVLTLL…DLLLEMLNAH (235 aa). The span at 506 to 515 shows a compositional bias: low complexity; the sequence is SISGSECSST. The segment at 506–530 is disordered; sequence SISGSECSSTEDSKNKESSQNLQSQ.

This sequence belongs to the nuclear hormone receptor family. NR3 subfamily. In terms of assembly, binds DNA as a homodimer. Can form a heterodimer with ESR1. Interacts with NCOA1, NCOA3, NCOA5 and NCOA6 coactivators, leading to a strong increase of transcription of target genes. Interacts with UBE1C and AKAP13. Interacts with DNTTIP2. Interacts with CCDC62 in the presence of estradiol/E2; this interaction seems to enhance the transcription of target genes. Interacts with PRMT2. Interacts with CCAR2 (via N-terminus) in a ligand-independent manner. Interacts with DNAAF4. Interacts with RBM39, in the presence of estradiol (E2). Interacts with STUB1/CHIP. In terms of processing, phosphorylation at Ser-87 and Ser-105 recruits NCOA1. As to expression, expressed in the CA1 region of the hippocampus, expression decreases with age (at protein level). Expressed in prostate, ovary, lung, liver, kidney, fat, bone, brain, uterus and testis.

It localises to the nucleus. Its function is as follows. Nuclear hormone receptor. Binds estrogens with an affinity similar to that of ESR1/ER-alpha, and activates expression of reporter genes containing estrogen response elements (ERE) in an estrogen-dependent manner. Functionally, lacks ligand binding affinity and suppresses ESR1/ER-alpha and ESR2 isoform 1/ER-beta1 mediated transcriptional activation and may act as a dominant negative regulator of estrogen action. Unable to bind DNA and activate transcription due to the truncation of the DNA binding domain. The protein is Estrogen receptor beta (Esr2) of Rattus norvegicus (Rat).